The primary structure comprises 317 residues: Ribosomal protein L11 methyltransferase (317 aa).

Positions 158, 179, 201, and 244 each coordinate S-adenosyl-L-methionine.

It belongs to the methyltransferase superfamily. PrmA family.

Its subcellular location is the cytoplasm. The catalysed reaction is L-lysyl-[protein] + 3 S-adenosyl-L-methionine = N(6),N(6),N(6)-trimethyl-L-lysyl-[protein] + 3 S-adenosyl-L-homocysteine + 3 H(+). In terms of biological role, methylates ribosomal protein L11. The protein is Ribosomal protein L11 methyltransferase of Lactococcus lactis subsp. cremoris (strain SK11).